The sequence spans 49 residues: uncharacterized protein (49 aa).

A helical membrane pass occupies residues L23–I43.

It is found in the host membrane. This is an uncharacterized protein from Spiroplasma melliferum (SpV1).